Consider the following 715-residue polypeptide: MKLLKKPAGLKKRKVISKRIKIEKKPSSEDEGSSDEEVPKLDGEGSLDGSEDEDDGTVTVEKGGVKKHKLDLEKLKQSDPEFFKFLQQEDADLLNMEDDGDDDEDDDEDDEDEEEEESDDDEDDEEDDDKTKIKKIRKPKIKSDNSGRLIVDSNVYSYLQQVLVLDDETSTPTNPSDVRMAVDVFVACVARVGADIEAPKYVINEQSIFEAVVRMCFQAMPDILKRLLKAKPEGDKVLFSKTAIKKYQTYVRTYLHAMIVFLNEVQTTEVLIATIKAMTRLVDLYAHFSRMSKLLIKAVVRIWSRKTLECRLPAFVCMNLLVKNYPQHFVPLYKTAYVAFVANSKIVTNETWPLLQFMHRTFAELTILNPEQAYKYAFVYIRQTAVHLRNAMISKGRKDLIFSIYNWQMMQCMYMWVRVIAKAHSVNGAEQIGELVYPLIQVIVGIFKLCNAPTFLPLRLHCCQLLIQLQASCTNYIPILQVSCDCLEELARELKSKPKPVKGAVKLPDIECTLKCSSQFSDLPQWRKVISEHVFRTMMQSAHLLASQAAFPDVVLPINHRISAILETMKNGDHAHLFRGFQTKLKEHSRFVLDVLARKSVDINDEMQVRAVRFDLNNPDSPIKTFYRQWEKVWKMKERSAVENSKKDDKKKKKEEEAAAAKKRKPNETVEDEDDVKPEVSKAKRKRIKIGAAAKKADASVPDQFADMSMWSDED.

Disordered stretches follow at residues S17–D71, F85–K132, and E638–D715. Over residues E89–D128 the composition is skewed to acidic residues. The span at E638–A660 shows a compositional bias: basic and acidic residues.

This sequence belongs to the NOC2 family.

The protein localises to the nucleus. Required for normal somatic gonad development and for regulation of germline development and proliferation. The chain is Nucleolar complex protein 2 homolog (pro-2) from Caenorhabditis elegans.